The sequence spans 104 residues: DNA-directed RNA polymerase subunit Rpo13 (104 aa).

2 disordered regions span residues 1 to 34 and 76 to 104; these read MVSG…EEFP and EKRD…SVEG. Positions 7-31 are enriched in acidic residues; that stretch reads TEEEKEGTNDEEVSEEREVEETSEE. A DNA-binding site is contributed by Glu-32. The segment covering 80 to 104 has biased composition (basic residues); the sequence is SRRKAKKAASKKVKKTKKKEKSVEG. The tract at residues 81–104 is required to bind DNA; that stretch reads RRKAKKAASKKVKKTKKKEKSVEG.

The protein belongs to the archaeal Rpo13 RNA polymerase subunit family. As to quaternary structure, part of the 13-subunit RNA polymerase complex. Rpo1N and Rpo5 form a cleft which docks Rpo13. Forms predominantly dimers in solution, although monomers and trimers can also be seen. Found associated with RNAP but also as a homodimer pool in the cytoplasm in vivo.

It localises to the cytoplasm. It carries out the reaction RNA(n) + a ribonucleoside 5'-triphosphate = RNA(n+1) + diphosphate. In terms of biological role, DNA-dependent RNA polymerase (RNAP) catalyzes the transcription of DNA into RNA using the four ribonucleoside triphosphates as substrates. A molten-globule protein, it binds dsDNA in the RNAP, in vitro binds dsDNA but not ssDNA. Its position in RNAP implies it functions in both transcription initiation and elongation. The protein is DNA-directed RNA polymerase subunit Rpo13 of Saccharolobus shibatae (strain ATCC 51178 / DSM 5389 / JCM 8931 / NBRC 15437 / B12) (Sulfolobus shibatae).